The following is a 745-amino-acid chain: Phosphate transporter PHO1 homolog 4 (745 aa).

The SPX domain maps to 1–290; that stretch reads MRFGKEFVSQ…KRNAAKLYME (290 aa). The Cytoplasmic portion of the chain corresponds to 1–342; the sequence is MRFGKEFVSQ…KINKERHLIT (342 aa). The chain crosses the membrane as a helical span at residues 343–363; the sequence is FSTGFFFGCGISLIVALGLII. Topologically, residues 364-383 are extracellular; sequence HARNIMGTPGQRTYMETMFP. The chain crosses the membrane as a helical span at residues 384-404; the sequence is LYRFFGFVVLHMDVYAANIYF. Residues 405-427 lie on the Cytoplasmic side of the membrane; sequence WRRYRVNYSFIFGFKQGTELGYR. A helical transmembrane segment spans residues 428–448; it reads HVLLLSFGLGTLSLCAVLLNL. Residues 449-464 lie on the Extracellular side of the membrane; it reads DMEMDAQTKDYRLVTE. The helical transmembrane segment at 465–485 threads the bilayer; that stretch reads LIPLFLLVLVIIIVLCPFNIL. The Cytoplasmic segment spans residues 486 to 615; the sequence is YRSSRFFFLS…YTLNRGSNWN (130 aa). Positions 550-744 constitute an EXS domain; it reads TSNIGFRTFY…NYEEDGDHHN (195 aa). Residues 616-636 traverse the membrane as a helical segment; sequence ITAWVFSGVATFYGTYWDIVL. At 637–660 the chain is on the extracellular side; the sequence is DWGLLQRGCKNSFLRDKLLVPHKT. Residues 661–681 traverse the membrane as a helical segment; that stretch reads VYYAAMVLNVLLRLVWLQTVL. Topologically, residues 682–745 are cytoplasmic; the sequence is DLKFSFLHRE…YEEDGDHHNN (64 aa).

Belongs to the SYG1 (TC 2.A.94) family. In terms of tissue distribution, expressed in root epidermis and cortex, leaf hydathodes, pollen grains and stigma apex.

Its subcellular location is the cell membrane. Functionally, may transport inorganic phosphate (Pi). This is Phosphate transporter PHO1 homolog 4 (PHO1-H4) from Arabidopsis thaliana (Mouse-ear cress).